Reading from the N-terminus, the 468-residue chain is Neuronal acetylcholine receptor subunit alpha-5 (468 aa).

An N-terminal signal peptide occupies residues 1-22; that stretch reads MAARGSGPRALRLLLLVQLVAG. Over 23 to 254 the chain is Extracellular; that stretch reads RCGLAGAAGG…VIKRLPLFYT (232 aa). Asn155, Asn183, and Asn229 each carry an N-linked (GlcNAc...) asparagine glycan. Residues Cys170 and Cys184 are joined by a disulfide bond. A disulfide bridge links Cys234 with Cys235. A run of 3 helical transmembrane segments spans residues 255 to 275, 282 to 302, and 317 to 337; these read LFLIIPCIGLSFLTVLVFYLP, ICLCTSVLVSLTVFLLVIEEI, and LVFTMIFVTLSIMVTVFAINI. Residues 338 to 429 are Cytoplasmic-facing; that stretch reads HHRSSSTHNA…WKFIAQVLDR (92 aa). The chain crosses the membrane as a helical span at residues 430–451; sequence MFLWTFLFVSIVGSLGLFVPVI. Residues 452-468 lie on the Extracellular side of the membrane; it reads YKWANILIPVHIGNANK.

This sequence belongs to the ligand-gated ion channel (TC 1.A.9) family. Acetylcholine receptor (TC 1.A.9.1) subfamily. Alpha-5/CHRNA5 sub-subfamily. As to quaternary structure, neuronal AChR that forms heteropentamers composed of two different type of subunits: alpha and non-alpha (beta). CHRNA5/alpha-5 subunit is only able to form functional nAChRs when co-assembled with another alpha subunit, can be combined to CHRNA4/alpha-4 or CHRNA3/alpha-3 and CHRNB4/beta-4 or CHRNB2/beta-2 to give rise to functional receptors. Interacts with LYPD6.

The protein resides in the synaptic cell membrane. The protein localises to the cell membrane. It carries out the reaction Ca(2+)(in) = Ca(2+)(out). It catalyses the reaction K(+)(in) = K(+)(out). The enzyme catalyses Na(+)(in) = Na(+)(out). Its activity is regulated as follows. Activated by a myriad of ligands such as acetylcholine, cytisine, nicotine, choline and epibatidine. Component of neuronal acetylcholine receptors (nAChRs) that function as pentameric, ligand-gated cation channels with high calcium permeability among other activities. nAChRs are excitatory neurotrasnmitter receptors formed by a collection of nAChR subunits known to mediate synaptic transmission in the nervous system and the neuromuscular junction. Each nAchR subunit confers differential attributes to channel properties, including activation, deactivation and desensitization kinetics, pH sensitivity, cation permeability, and binding to allosteric modulators. Has an accessory rather than functional role and is only able to form functional nAChRs when co-assembled with another beta subunit. Participates in pentameric assemblies along with CHRNA3, CHRNA4, CHRNB2 and CHRNB4. Increases receptor sensitivity to acetylcholine and nicotine when associated with CHRNA4 and CHRNB2. Plays a role in nicotine addiction. This chain is Neuronal acetylcholine receptor subunit alpha-5, found in Homo sapiens (Human).